The chain runs to 113 residues: U11-theraphotoxin-Hhn1d (113 aa).

The signal sequence occupies residues 1–21 (MNTVRVTFLLVFVVAVSLGQA). The propeptide occupies 22–74 (DKDENRMEMKDKTEQGKSYLHFAENLLLQKLEDVEAKLLEKDSEKSINSRQKR). Cystine bridges form between Cys75-Cys90, Cys82-Cys95, and Cys89-Cys110.

The protein belongs to the neurotoxin 14 (magi-1) family. 01 (HNTX-16) subfamily. As to expression, expressed by the venom gland.

The protein localises to the secreted. Probable ion channel inhibitor. The sequence is that of U11-theraphotoxin-Hhn1d from Cyriopagopus hainanus (Chinese bird spider).